Consider the following 347-residue polypeptide: 5-deoxyribose 1-phosphate isomerase (347 aa).

Residues 48-50, Arg91, and Gln198 contribute to the substrate site; that span reads RGA. Asp239 (proton donor) is an active-site residue. 249-250 contributes to the substrate binding site; the sequence is NK.

The protein belongs to the EIF-2B alpha/beta/delta subunits family. DrdI subfamily.

It catalyses the reaction 5-deoxy-alpha-D-ribose 1-phosphate = 5-deoxy-D-ribulose 1-phosphate. The protein operates within carbohydrate degradation. Catalyzes the isomerization of 5-deoxy-alpha-D-ribose 1-phosphate to 5-deoxy-D-ribulose 1-phosphate, as part of a 5-deoxyribose salvage pathway that recycles this toxic radical SAM enzyme by-product to mainstream metabolites. In Bacillus thuringiensis (strain Al Hakam), this protein is 5-deoxyribose 1-phosphate isomerase.